Here is a 431-residue protein sequence, read N- to C-terminus: Trigger factor (431 aa).

Positions 158 to 243 (GDLVAVETWS…VAEVSEPVVP (86 aa)) constitute a PPIase FKBP-type domain.

This sequence belongs to the FKBP-type PPIase family. Tig subfamily.

It localises to the cytoplasm. It catalyses the reaction [protein]-peptidylproline (omega=180) = [protein]-peptidylproline (omega=0). In terms of biological role, involved in protein export. Acts as a chaperone by maintaining the newly synthesized protein in an open conformation. Functions as a peptidyl-prolyl cis-trans isomerase. The polypeptide is Trigger factor (Stenotrophomonas maltophilia (strain R551-3)).